The following is a 549-amino-acid chain: Ceramide kinase 1 (549 aa).

The DAGKc domain maps to 162–316 (NRPKNIIIFI…VDVCTVHQHQ (155 aa)). ATP-binding positions include 172–174 (NPF) and 205–209 (TERAN). 233 to 236 (GGDG) serves as a coordination point for substrate. Residue aspartate 235 is the Proton donor/acceptor of the active site. ATP-binding positions include glutamate 240, 277–279 (GSA), arginine 342, arginine 348, and 500–502 (DGE).

The catalysed reaction is an N-acylsphing-4-enine + ATP = an N-acylsphing-4-enine 1-phosphate + ADP + H(+). It carries out the reaction an N-acyl-15-methylhexadecasphing-4-enine + ATP = an N-acyl-15-methylhexadecasphing-4-enine-1-phosphate + ADP + H(+). The protein operates within lipid metabolism; sphingolipid metabolism. Its function is as follows. Catalyzes the phosphorylation of ceramide to form ceramide 1-phosphate. C.elegans contain specific sphingoid bases, which are unique or different in structure compared to the sphingoid bases found in other animals. Two examples of these distinctive compounds are: 15-methylhexadecasphinganine and 15-methylhexadecasphing-4-enine. The sequence is that of Ceramide kinase 1 from Caenorhabditis elegans.